The primary structure comprises 371 residues: Anhydro-N-acetylmuramic acid kinase (371 aa).

12-20 (GTVLDGNID) is a binding site for ATP.

The protein belongs to the anhydro-N-acetylmuramic acid kinase family.

The catalysed reaction is 1,6-anhydro-N-acetyl-beta-muramate + ATP + H2O = N-acetyl-D-muramate 6-phosphate + ADP + H(+). Its pathway is amino-sugar metabolism; 1,6-anhydro-N-acetylmuramate degradation. It participates in cell wall biogenesis; peptidoglycan recycling. Catalyzes the specific phosphorylation of 1,6-anhydro-N-acetylmuramic acid (anhMurNAc) with the simultaneous cleavage of the 1,6-anhydro ring, generating MurNAc-6-P. Is required for the utilization of anhMurNAc either imported from the medium or derived from its own cell wall murein, and thus plays a role in cell wall recycling. In Mesorhizobium japonicum (strain LMG 29417 / CECT 9101 / MAFF 303099) (Mesorhizobium loti (strain MAFF 303099)), this protein is Anhydro-N-acetylmuramic acid kinase.